Here is a 354-residue protein sequence, read N- to C-terminus: NADH-quinone oxidoreductase subunit H (354 aa).

The next 8 membrane-spanning stretches (helical) occupy residues Ile-22–Leu-42, Tyr-91–Phe-111, Leu-124–Ala-144, Val-162–Leu-182, Leu-203–Val-223, Gly-250–Met-270, Ile-291–Ile-311, and Leu-326–Ile-346.

It belongs to the complex I subunit 1 family. As to quaternary structure, NDH-1 is composed of 14 different subunits. Subunits NuoA, H, J, K, L, M, N constitute the membrane sector of the complex.

The protein resides in the cell inner membrane. The catalysed reaction is a quinone + NADH + 5 H(+)(in) = a quinol + NAD(+) + 4 H(+)(out). In terms of biological role, NDH-1 shuttles electrons from NADH, via FMN and iron-sulfur (Fe-S) centers, to quinones in the respiratory chain. The immediate electron acceptor for the enzyme in this species is believed to be ubiquinone. Couples the redox reaction to proton translocation (for every two electrons transferred, four hydrogen ions are translocated across the cytoplasmic membrane), and thus conserves the redox energy in a proton gradient. This subunit may bind ubiquinone. This Cupriavidus metallidurans (strain ATCC 43123 / DSM 2839 / NBRC 102507 / CH34) (Ralstonia metallidurans) protein is NADH-quinone oxidoreductase subunit H.